The primary structure comprises 183 residues: Ribosome rescue factor SmrB (183 aa).

The region spanning 98–173 (LDLHGLTQLQ…GDAALLVLIE (76 aa)) is the Smr domain.

It belongs to the SmrB family. As to quaternary structure, associates with collided ribosomes, but not with correctly translating polysomes.

Functionally, acts as a ribosome collision sensor. Detects stalled/collided disomes (pairs of ribosomes where the leading ribosome is stalled and a second ribosome has collided with it) and endonucleolytically cleaves mRNA at the 5' boundary of the stalled ribosome. Stalled/collided disomes form a new interface (primarily via the 30S subunits) that binds SmrB. Cleaved mRNA becomes available for tmRNA ligation, leading to ribosomal subunit dissociation and rescue of stalled ribosomes. This is Ribosome rescue factor SmrB from Shigella boydii serotype 18 (strain CDC 3083-94 / BS512).